The following is a 445-amino-acid chain: Exodeoxyribonuclease 7 large subunit (445 aa).

It belongs to the XseA family. In terms of assembly, heterooligomer composed of large and small subunits.

Its subcellular location is the cytoplasm. It catalyses the reaction Exonucleolytic cleavage in either 5'- to 3'- or 3'- to 5'-direction to yield nucleoside 5'-phosphates.. Its function is as follows. Bidirectionally degrades single-stranded DNA into large acid-insoluble oligonucleotides, which are then degraded further into small acid-soluble oligonucleotides. The sequence is that of Exodeoxyribonuclease 7 large subunit from Staphylococcus aureus (strain USA300 / TCH1516).